Reading from the N-terminus, the 244-residue chain is 1-(5-phosphoribosyl)-5-[(5-phosphoribosylamino)methylideneamino] imidazole-4-carboxamide isomerase (244 aa).

Asp8 serves as the catalytic Proton acceptor. Asp129 serves as the catalytic Proton donor.

It belongs to the HisA/HisF family.

The protein localises to the cytoplasm. The catalysed reaction is 1-(5-phospho-beta-D-ribosyl)-5-[(5-phospho-beta-D-ribosylamino)methylideneamino]imidazole-4-carboxamide = 5-[(5-phospho-1-deoxy-D-ribulos-1-ylimino)methylamino]-1-(5-phospho-beta-D-ribosyl)imidazole-4-carboxamide. It functions in the pathway amino-acid biosynthesis; L-histidine biosynthesis; L-histidine from 5-phospho-alpha-D-ribose 1-diphosphate: step 4/9. The polypeptide is 1-(5-phosphoribosyl)-5-[(5-phosphoribosylamino)methylideneamino] imidazole-4-carboxamide isomerase (Maricaulis maris (strain MCS10) (Caulobacter maris)).